Consider the following 201-residue polypeptide: ADP-ribosylation factor-like protein 4D (201 aa).

Glycine 2 is lipidated: N-myristoyl glycine. Residues 28 to 35 (GLDSAGKT), 76 to 80 (DVGGQ), and 135 to 138 (NKQD) each bind GTP.

This sequence belongs to the small GTPase superfamily. Arf family. As to quaternary structure, interacts with CYTH2; the interaction is direct and ARL4D GTP-dependent. Does not interact with ARL4D.

It localises to the nucleus. The protein localises to the nucleolus. Its subcellular location is the cell membrane. The protein resides in the cytoplasm. Its function is as follows. Small GTP-binding protein which cycles between an inactive GDP-bound and an active GTP-bound form, and the rate of cycling is regulated by guanine nucleotide exchange factors (GEF) and GTPase-activating proteins (GAP). GTP-binding protein that does not act as an allosteric activator of the cholera toxin catalytic subunit. Recruits CYTH1, CYTH2, CYTH3 and CYTH4 to the plasma membrane in GDP-bound form. The polypeptide is ADP-ribosylation factor-like protein 4D (Arl4d) (Mus musculus (Mouse)).